The primary structure comprises 240 residues: 2,3-bisphosphoglycerate-dependent phosphoglycerate mutase 2 (240 aa).

Residues 8 to 15 (RHGQSEWN), 21 to 22 (TG), Arg60, 87 to 90 (ERHY), Lys98, 114 to 115 (RR), and 183 to 184 (GN) contribute to the substrate site. Catalysis depends on His9, which acts as the Tele-phosphohistidine intermediate. The active-site Proton donor/acceptor is Glu87.

This sequence belongs to the phosphoglycerate mutase family. BPG-dependent PGAM subfamily.

The enzyme catalyses (2R)-2-phosphoglycerate = (2R)-3-phosphoglycerate. It participates in carbohydrate degradation; glycolysis; pyruvate from D-glyceraldehyde 3-phosphate: step 3/5. Its function is as follows. Catalyzes the interconversion of 2-phosphoglycerate and 3-phosphoglycerate. This Bacillus cereus (strain ATCC 10987 / NRS 248) protein is 2,3-bisphosphoglycerate-dependent phosphoglycerate mutase 2.